The primary structure comprises 504 residues: ATP synthase subunit alpha (504 aa).

ATP is bound at residue G169–T176.

It belongs to the ATPase alpha/beta chains family. F-type ATPases have 2 components, CF(1) - the catalytic core - and CF(0) - the membrane proton channel. CF(1) has five subunits: alpha(3), beta(3), gamma(1), delta(1), epsilon(1). CF(0) has three main subunits: a(1), b(2) and c(9-12). The alpha and beta chains form an alternating ring which encloses part of the gamma chain. CF(1) is attached to CF(0) by a central stalk formed by the gamma and epsilon chains, while a peripheral stalk is formed by the delta and b chains.

The protein resides in the cell membrane. It carries out the reaction ATP + H2O + 4 H(+)(in) = ADP + phosphate + 5 H(+)(out). Its function is as follows. Produces ATP from ADP in the presence of a proton gradient across the membrane. The alpha chain is a regulatory subunit. The sequence is that of ATP synthase subunit alpha from Lactiplantibacillus plantarum (strain ATCC BAA-793 / NCIMB 8826 / WCFS1) (Lactobacillus plantarum).